The following is a 666-amino-acid chain: MGQTKSKIKSKYASYLSFIKILLKRGGVKVSTKNLIKLFQIIEQFCPWFPEQGTLDLKDWKRIGKELKQAGRKGNIIPLTVWNDWAIIKAALEPFQTEEDSVSVSDAPGSCIIDCNENTRKKSQKETEGLHCEYVAEPVMAQSTQNVDYNQLQEVIYPETLKLEGKGPELVGPSESKPRGTSPLPAGQVPVTLQPQKQVKENKTQPPVAYQYWPPAELQYRPPPESQYGYPGMPPAPQGRAPYPQPPTRRLNPTAPPSRQGSKLHEIIDKSRKEGDTEAWQFPVTLEPMPPGEGAQEGEPPTVEARYKSFSIKKLKDMKEGVKQYGPNSPYMRTLLDSIAHGHRLIPYDWEILAKSSLSPSQFLQFKTWWIDGVQEQVRRNRAANPPVNIDADQLLGIGQNWSTISQQALMQNEAIEQVRAICLRAWEKIQDPGSTCPSFNTVRQGSKEPYPDFVARLQDVAQKSIADEKARKVIVELMAYENANPECQSAIKPLKGKVPAGSDVISEYVKACDGIGGAMHKAMLMAQAITGVVLGGQVRTFGRKCYNCGQIGHLKKNCPVLNKQNITIQATTTGREPPDLCPRCKKGKHWASQCRSKFDKNGQPLSGNEQRGQPQAPQQTGAFPIQPFVPQGFQGQQPPLSQVFQGISQLPQYNNCPPPQAAVQQ.

Glycine 2 is lipidated: N-myristoyl glycine. Positions 165–264 (GKGPELVGPS…APPSRQGSKL (100 aa)) are disordered. Residues 232–247 (GMPPAPQGRAPYPQPP) are compositionally biased toward pro residues. CCHC-type zinc fingers lie at residues 544–561 (RKCYNCGQIGHLKKNCPV) and 580–597 (DLCPRCKKGKHWASQCRS). The disordered stretch occupies residues 598-642 (KFDKNGQPLSGNEQRGQPQAPQQTGAFPIQPFVPQGFQGQQPPLS). Over residues 604–622 (QPLSGNEQRGQPQAPQQTG) the composition is skewed to polar residues. A compositionally biased stretch (low complexity) spans 624–640 (FPIQPFVPQGFQGQQPP).

This sequence belongs to the beta type-B retroviral Gag protein family. HERV class-II K(HML-2) gag subfamily. Myristoylation is essential for retroviral assembly. Alteration of the glycine residue leads to a block in the budding of particles and an accumulation of Gag inside the cell. Post-translationally, specific enzymatic cleavages may yield mature proteins.

It localises to the cell membrane. Its function is as follows. The products of the Gag polyproteins of infectious retroviruses perform highly complex orchestrated tasks during the assembly, budding, maturation, and infection stages of the viral replication cycle. During viral assembly, the proteins form membrane associations and self-associations that ultimately result in budding of an immature virion from the infected cell. Gag precursors also function during viral assembly to selectively bind and package two plus strands of genomic RNA. Endogenous Gag proteins may have kept, lost or modified their original function during evolution. The sequence is that of Endogenous retrovirus group K member 6 Gag polyprotein (ERVK-6) from Homo sapiens (Human).